We begin with the raw amino-acid sequence, 444 residues long: Glycogen synthase (444 aa).

R15 contributes to the ADP-alpha-D-glucose binding site.

The protein belongs to the glycosyltransferase 1 family. Bacterial/plant glycogen synthase subfamily.

The catalysed reaction is [(1-&gt;4)-alpha-D-glucosyl](n) + ADP-alpha-D-glucose = [(1-&gt;4)-alpha-D-glucosyl](n+1) + ADP + H(+). The protein operates within glycan biosynthesis; glycogen biosynthesis. In terms of biological role, synthesizes alpha-1,4-glucan chains using ADP-glucose. The chain is Glycogen synthase from Deinococcus radiodurans (strain ATCC 13939 / DSM 20539 / JCM 16871 / CCUG 27074 / LMG 4051 / NBRC 15346 / NCIMB 9279 / VKM B-1422 / R1).